Reading from the N-terminus, the 164-residue chain is UPF0303 protein Smed_2872 (164 aa).

This sequence belongs to the UPF0303 family.

The chain is UPF0303 protein Smed_2872 from Sinorhizobium medicae (strain WSM419) (Ensifer medicae).